We begin with the raw amino-acid sequence, 41 residues long: SPbeta prophage-derived uncharacterized protein YosF (41 aa).

The sequence is that of SPbeta prophage-derived uncharacterized protein YosF (yosF) from Bacillus subtilis (strain 168).